Here is a 782-residue protein sequence, read N- to C-terminus: MYKKMSLRQLFSDRPPLNAVLQEKAQKLRYACSPSKCIHSLLSFLPIITWLPKYDWSHSFFGDLSGGLTMAVFSVPQGIALASITGVPPVYGLYTAIFPSFLYIFFGTSKHNALGGFAVLSLMTHGAIEKVMLRTATSYNATAYVNHTLDELLDKENETALISNTTLMQILGNETSFVEEVTMEMWTEGVTPVKQIHVATTIIFLAGVIQVFMGVFRLQYLTSLFSEQVMSGFVVGGGIHVFFAQIGNMLGIELPRRSGPGYLYYRIWDLVENLDNVHIPTVCISLSSFLFLVFGKEYLAPWLNSAFNYPVPFELVLVVVGITATNYAELSLRHDVKVVGNIPTEFPPPSLPRFDLIRHIGLNAAAIAITAVAIHITVAKVVEKRYKYKINHGQELYALGFVGVLSSFFPVFPVTSGFARSVVGAAVGGSTQLTCLFSSLALLSVILCIGPALEYLPQCILSAMIIFAQKGMLEKFGELKSLWPVFKIDFTIWLMSFFLTVCYDMGEGLLMAIGFAVLTTIIRTQRPKWHFLSRDDDTENYKETKKRDLERIQGNVCIFRMDAPLIFTSSDRFTMSVWQCVKKWERCKSESFVTIEQMNSDRSADIFDSKLKSARRRWKRDQKSENRCKLVIDCDGFPYVDYLGLSTLKSVYVDLQAAGIQCFFVVQKSDLKKLFRATDFYEVVDESKVFNKVGDAVKAAEQHISSPKTTKEILTALASIATTDTVLIDEESSDSNDNDDAEIQERITEESENSEEVMSETSVSIEDATSLTSSRNSINSEE.

Transmembrane regions (helical) follow at residues 30 to 52 (YACS…TWLP), 64 to 84 (LSGG…LASI), 86 to 106 (GVPP…YIFF), 113 to 133 (ALGG…KVML), 196 to 216 (IHVA…MGVF), 232 to 252 (GFVV…MLGI), 274 to 294 (LDNV…FLVF), 302 to 322 (WLNS…VVGI), 359 to 379 (HIGL…ITVA), 398 to 418 (ALGF…TSGF), 433 to 453 (LTCL…GPAL), and 497 to 517 (FFLT…GFAV). An STAS domain is found at 546-700 (KRDLERIQGN…NKVGDAVKAA (155 aa)). Acidic residues predominate over residues 728 to 742 (IDEESSDSNDNDDAE). The tract at residues 728–782 (IDEESSDSNDNDDAEIQERITEESENSEEVMSETSVSIEDATSLTSSRNSINSEE) is disordered. A compositionally biased stretch (polar residues) spans 767 to 782 (DATSLTSSRNSINSEE).

Belongs to the SLC26A/SulP transporter (TC 2.A.53) family.

It is found in the membrane. Functionally, possible sulfate transporter. This Caenorhabditis elegans protein is Sulfate permease family protein 3 (sulp-3).